The following is a 479-amino-acid chain: UDP-N-acetylmuramate--L-alanine ligase (479 aa).

Residue 114-120 coordinates ATP; sequence GTHGKTT.

It belongs to the MurCDEF family.

It is found in the cytoplasm. The enzyme catalyses UDP-N-acetyl-alpha-D-muramate + L-alanine + ATP = UDP-N-acetyl-alpha-D-muramoyl-L-alanine + ADP + phosphate + H(+). It functions in the pathway cell wall biogenesis; peptidoglycan biosynthesis. Its function is as follows. Cell wall formation. This chain is UDP-N-acetylmuramate--L-alanine ligase, found in Pelodictyon phaeoclathratiforme (strain DSM 5477 / BU-1).